The sequence spans 446 residues: Tubulin beta-6 chain (446 aa).

An MREI motif motif is present at residues methionine 1–isoleucine 4. Residues glutamine 11, glutamate 69, serine 138, glycine 142, threonine 143, glycine 144, asparagine 204, and asparagine 226 each contribute to the GTP site. Glutamate 69 serves as a coordination point for Mg(2+). Residues valine 419 to threonine 446 are disordered. Positions alanine 430–alanine 440 are enriched in acidic residues.

Belongs to the tubulin family. As to quaternary structure, dimer of alpha and beta chains. A typical microtubule is a hollow water-filled tube with an outer diameter of 25 nm and an inner diameter of 15 nM. Alpha-beta heterodimers associate head-to-tail to form protofilaments running lengthwise along the microtubule wall with the beta-tubulin subunit facing the microtubule plus end conferring a structural polarity. Microtubules usually have 13 protofilaments but different protofilament numbers can be found in some organisms and specialized cells. Mg(2+) is required as a cofactor. Post-translationally, some glutamate residues at the C-terminus are polyglycylated, resulting in polyglycine chains on the gamma-carboxyl group. Glycylation is mainly limited to tubulin incorporated into axonemes (cilia and flagella) whereas glutamylation is prevalent in neuronal cells, centrioles, axonemes, and the mitotic spindle. Both modifications can coexist on the same protein on adjacent residues, and lowering polyglycylation levels increases polyglutamylation, and reciprocally. The precise function of polyglycylation is still unclear. In terms of processing, some glutamate residues at the C-terminus are polyglutamylated, resulting in polyglutamate chains on the gamma-carboxyl group. Polyglutamylation plays a key role in microtubule severing by spastin (SPAST). SPAST preferentially recognizes and acts on microtubules decorated with short polyglutamate tails: severing activity by SPAST increases as the number of glutamates per tubulin rises from one to eight, but decreases beyond this glutamylation threshold. Highly expressed in bone marrow.

It is found in the cytoplasm. Its subcellular location is the cytoskeleton. In terms of biological role, tubulin is the major constituent of microtubules, a cylinder consisting of laterally associated linear protofilaments composed of alpha- and beta-tubulin heterodimers. Microtubules grow by the addition of GTP-tubulin dimers to the microtubule end, where a stabilizing cap forms. Below the cap, tubulin dimers are in GDP-bound state, owing to GTPase activity of alpha-tubulin. The sequence is that of Tubulin beta-6 chain from Gallus gallus (Chicken).